The chain runs to 275 residues: Penicillin-insensitive murein endopeptidase (275 aa).

The N-terminal stretch at 1–19 is a signal peptide; the sequence is MKNWIVGMVALVTMVPVMA. 3 disulfides stabilise this stretch: Cys44–Cys264, Cys187–Cys235, and Cys216–Cys223. 5 residues coordinate Zn(2+): His110, His113, Asp120, Asp147, and His211. A disordered region spans residues 227-262; it reads DTPPPGDGCGAELESWFQPPPPSAKPGKTLPPPLPP. The segment covering 244–262 has biased composition (pro residues); it reads QPPPPSAKPGKTLPPPLPP.

It belongs to the peptidase M74 family. Dimer. Requires Zn(2+) as cofactor.

It localises to the periplasm. Its function is as follows. Murein endopeptidase that cleaves the D-alanyl-meso-2,6-diamino-pimelyl amide bond that connects peptidoglycan strands. Likely plays a role in the removal of murein from the sacculus. This Yersinia pestis bv. Antiqua (strain Antiqua) protein is Penicillin-insensitive murein endopeptidase.